The sequence spans 305 residues: Peroxisome assembly protein 26 (305 aa).

The Cytoplasmic segment spans residues 1–246 (MKSDASTSAA…RRLWGSVVSH (246 aa)). Residues 247 to 267 (LLSQPFRKGLLAALILCLLIL) form a helical; Signal-anchor for type II membrane protein membrane-spanning segment. At 268–305 (RFDPAAPSSLPFLYQLTQLFRRIQKATLSRLYPLALRD) the chain is on the peroxisomal matrix side.

This sequence belongs to the peroxin-26 family. In terms of assembly, interacts (via its cytoplasmic domain) with PEX6; interaction is direct and is ATP-dependent. Interacts with PEX1; interaction is indirect and is mediated via interaction with PEX6.

It localises to the peroxisome membrane. Functionally, peroxisomal docking factor that anchors PEX1 and PEX6 to peroxisome membranes. PEX26 is therefore required for the formation of the PEX1-PEX6 AAA ATPase complex, a complex that mediates the extraction of the PEX5 receptor from peroxisomal membrane. This chain is Peroxisome assembly protein 26, found in Mus musculus (Mouse).